The following is a 181-amino-acid chain: Inner membrane-spanning protein YciB (181 aa).

5 helical membrane-spanning segments follow: residues 10–30 (LIIF…GALI), 50–70 (MHLI…VFHD), 72–92 (AFIK…LGVS), 118–138 (VTWY…YVAF), and 148–168 (FKVF…VFYL).

This sequence belongs to the YciB family.

It localises to the cell inner membrane. In terms of biological role, plays a role in cell envelope biogenesis, maintenance of cell envelope integrity and membrane homeostasis. This Shewanella sp. (strain ANA-3) protein is Inner membrane-spanning protein YciB.